We begin with the raw amino-acid sequence, 339 residues long: MSYSAPSQITQRQLAYFEGKHVLIAGELIDDFPFELAKHCESTSIFTTNYSYYKQFAEHDSIHCYFGSELTETTNADMILLYWPKAKAEAEYLLTMLLAKLGKSTEIVVVGENRSGVKSIEKMFADFGPINKFDSARRCSFYWGQCTEEAPTFNQQDWFKEYQVEFENHTIEVRSLPGVFSHGEFDKGSELLLQTLPALRGHVLDFGCGAGVIGSVMKTINPKIHLDMVDISALAIASSIETLKANNLEGCVFASDVYSDTKENYQFIVSNPPFHAGLKTHYSSTEELLEKAPQNLTHEGQLILVANSFLQYPPIIEKAFGECLTLAKNNKFKIYSAQK.

This sequence belongs to the methyltransferase superfamily. RsmC family. Monomer.

The protein localises to the cytoplasm. The catalysed reaction is guanosine(1207) in 16S rRNA + S-adenosyl-L-methionine = N(2)-methylguanosine(1207) in 16S rRNA + S-adenosyl-L-homocysteine + H(+). Specifically methylates the guanine in position 1207 of 16S rRNA in the 30S particle. The sequence is that of Ribosomal RNA small subunit methyltransferase C from Aliivibrio fischeri (strain MJ11) (Vibrio fischeri).